The primary structure comprises 308 residues: E3 ubiquitin-protein ligase SINAT2 (308 aa).

The RING-type zinc-finger motif lies at 60–96 (CPVCTNLMYPPIHQCPNGHTLCSNCKLRVQNTCPTCR). The SBD stretch occupies residues 110–303 (VAESLEVPCR…QELKLRVTGR (194 aa)). The segment at 113–173 (SLEVPCRYQN…LVVHLKDDHK (61 aa)) adopts an SIAH-type zinc-finger fold. Residues Cys-118, Cys-125, His-137, Cys-141, Cys-148, Cys-155, His-167, and His-172 each contribute to the Zn(2+) site.

This sequence belongs to the SINA (Seven in absentia) family. As to quaternary structure, interacts with RAP2-2. Interacts with SINAT6. Interacts with ATG6 and TRAF1A. Interacts with WAV3. Interacts with FREE1. Interacts with ELC/VPS23A.

It localises to the endosome. The protein localises to the multivesicular body. Its subcellular location is the cytoplasmic vesicle. The protein resides in the autophagosome. It carries out the reaction S-ubiquitinyl-[E2 ubiquitin-conjugating enzyme]-L-cysteine + [acceptor protein]-L-lysine = [E2 ubiquitin-conjugating enzyme]-L-cysteine + N(6)-ubiquitinyl-[acceptor protein]-L-lysine.. The protein operates within protein modification; protein ubiquitination. Functionally, E3 ubiquitin-protein ligase that mediates ubiquitination and subsequent proteasomal degradation of target proteins. E3 ubiquitin ligases accept ubiquitin from an E2 ubiquitin-conjugating enzyme in the form of a thioester and then directly transfers the ubiquitin to targeted substrates. It probably triggers the ubiquitin-mediated degradation of different substrates. Mediates the proteasomal-dependent degradation of ATG6, a component of the autophagosome complex. Requires TRAF1A/MUSE14 and TRAF1B/MUSE13 to target ATG6 for ubiquitination and subsequent regulation of autophagosome assembly. Modulates directly the ubiquitination and proteasomal-dependent degradation of FREE1, a component of the ESCRT-I complex. Modulates directly the ubiquitination and proteasomal-dependent degradation of ELC/VPS23A, a component of the ESCRT-I complex. In Arabidopsis thaliana (Mouse-ear cress), this protein is E3 ubiquitin-protein ligase SINAT2.